Consider the following 315-residue polypeptide: tRNA-dihydrouridine(16) synthase (315 aa).

FMN is bound by residues 7 to 9 and glutamine 68; that span reads PME. Cysteine 98 (proton donor) is an active-site residue. FMN-binding positions include lysine 139, 199 to 201, and 223 to 224; these read NGE and GR.

It belongs to the Dus family. DusC subfamily. Requires FMN as cofactor.

The catalysed reaction is 5,6-dihydrouridine(16) in tRNA + NADP(+) = uridine(16) in tRNA + NADPH + H(+). The enzyme catalyses 5,6-dihydrouridine(16) in tRNA + NAD(+) = uridine(16) in tRNA + NADH + H(+). Catalyzes the synthesis of 5,6-dihydrouridine (D), a modified base found in the D-loop of most tRNAs, via the reduction of the C5-C6 double bond in target uridines. Specifically modifies U16 in tRNAs. The chain is tRNA-dihydrouridine(16) synthase from Aquipseudomonas alcaligenes (Pseudomonas alcaligenes).